Here is a 65-residue protein sequence, read N- to C-terminus: VVYTDCTESGQNLCLCEDSNVCGEGNKCILGSNGEKNQCVTGEGTPKPQSHNDGDFEEIPEEYLQ.

The interaction with thrombin active site stretch occupies residues 1–3 (VVY). 3 disulfides stabilise this stretch: Cys6–Cys14, Cys16–Cys28, and Cys22–Cys39. The disordered stretch occupies residues 39 to 65 (CVTGEGTPKPQSHNDGDFEEIPEEYLQ). O-linked (GalNAc...) threonine glycosylation is present at Thr45. Residues 55-65 (DFEEIPEEYLQ) form an interaction with fibrinogen-binding exosite of thrombin region. Acidic residues predominate over residues 55-65 (DFEEIPEEYLQ). Tyr63 carries the sulfotyrosine modification.

It belongs to the protease inhibitor I14 (hirudin) family.

The protein resides in the secreted. Its function is as follows. Hirudin is a potent thrombin-specific protease inhibitor. It forms a stable non-covalent complex with alpha-thrombin, thereby abolishing its ability to cleave fibrinogen. The protein is Hirudin-3A of Hirudo medicinalis (Medicinal leech).